We begin with the raw amino-acid sequence, 132 residues long: Translation initiation factor 5A (132 aa).

Lys36 carries the post-translational modification Hypusine.

Belongs to the eIF-5A family.

It localises to the cytoplasm. Functions by promoting the formation of the first peptide bond. This chain is Translation initiation factor 5A (eIF5A), found in Thermofilum pendens (strain DSM 2475 / Hrk 5).